The following is a 728-amino-acid chain: Probable 3',5'-cyclic phosphodiesterase pde-5 (728 aa).

The GAF domain occupies 214–371 (SMDAVIIKVM…HHAKLYDKIR (158 aa)). The region spanning 390 to 709 (CNADEVNKLK…KKWEELAEEQ (320 aa)) is the PDEase domain. The active-site Proton donor is the His465. A divalent metal cation contacts are provided by His469, His503, Asp504, and Asp614. Positions 691–728 (MRERCEYNAKKWEELAEEQRKKQEALAQQNGEANETQE) form a coiled coil. The disordered stretch occupies residues 708 to 728 (EQRKKQEALAQQNGEANETQE). Polar residues predominate over residues 716–728 (LAQQNGEANETQE).

It belongs to the cyclic nucleotide phosphodiesterase family. Requires a divalent metal cation as cofactor.

The enzyme catalyses a nucleoside 3',5'-cyclic phosphate + H2O = a nucleoside 5'-phosphate + H(+). In terms of biological role, redundantly with pde-1, plays a role in the AFD thermosensory neurons to regulate microvilli receptive ending morphology, possibly by regulating cGMP levels. This is Probable 3',5'-cyclic phosphodiesterase pde-5 (pde-5) from Caenorhabditis elegans.